The primary structure comprises 320 residues: 1-aminocyclopropane-1-carboxylate oxidase 3 (320 aa).

A Fe2OG dioxygenase domain is found at 153–253; sequence PNFGTKVSNY…RMSLASFYNP (101 aa). Fe cation contacts are provided by His-177, Asp-179, and His-234.

This sequence belongs to the iron/ascorbate-dependent oxidoreductase family. The cofactor is Fe cation.

It catalyses the reaction 1-aminocyclopropane-1-carboxylate + L-ascorbate + O2 = ethene + L-dehydroascorbate + hydrogen cyanide + CO2 + 2 H2O. The protein operates within alkene biosynthesis; ethylene biosynthesis via S-adenosyl-L-methionine; ethylene from S-adenosyl-L-methionine: step 2/2. This is 1-aminocyclopropane-1-carboxylate oxidase 3 (ACO3) from Petunia hybrida (Petunia).